Reading from the N-terminus, the 142-residue chain is MQSLPDTRQQSFDEIYGPPENFLEIEVRNPRTHGIGRHMYTDYEIVCRTNIPAFKLRQSTVRRRYSDFEYFRDILERESARVTIPPLPGKVFTNRFSDDVIEGRRAGLEKFLKIVVGHPLLQTGSKVLAAFVQDPNWDRNAW.

Residues 21-138 enclose the PX domain; it reads NFLEIEVRNP…AAFVQDPNWD (118 aa). R64, S66, K90, R95, and R104 together coordinate a 1,2-diacyl-sn-glycero-3-phospho-(1D-myo-inositol-3-phosphate).

This sequence belongs to the sorting nexin family.

The protein localises to the cytoplasm. Its subcellular location is the golgi apparatus membrane. It is found in the prevacuolar compartment membrane. Required for retention of late Golgi membrane proteins. Component of the retrieval machinery that functions by direct interaction with the cytosolic tails of certain TGN membrane proteins during the sorting/budding process at the prevacuolar compartment. Binds phosphatidylinositol 3-phosphate (PtdIns(P3)). The chain is Sorting nexin-3 (snx-3) from Neurospora crassa (strain ATCC 24698 / 74-OR23-1A / CBS 708.71 / DSM 1257 / FGSC 987).